We begin with the raw amino-acid sequence, 165 residues long: UPF0303 protein Bphy_1660 (165 aa).

This sequence belongs to the UPF0303 family.

This chain is UPF0303 protein Bphy_1660, found in Paraburkholderia phymatum (strain DSM 17167 / CIP 108236 / LMG 21445 / STM815) (Burkholderia phymatum).